The following is a 213-amino-acid chain: uncharacterized protein (213 aa).

Residues 1 to 14 show a composition bias toward polar residues; that stretch reads MSSDVLVTTPAQRQ. Residues 1-26 form a disordered region; it reads MSSDVLVTTPAQRQTEPHAEAVSRNR. One can recognise an HTH tetR-type domain in the interval 29–89; it reads QATFRKVLAA…EVYLDLVRQV (61 aa).

This is an uncharacterized protein from Mycobacterium tuberculosis (strain CDC 1551 / Oshkosh).